Here is a 77-residue protein sequence, read N- to C-terminus: Translation initiation factor IF-1, chloroplastic (77 aa).

An S1-like domain is found at 1–71 (MKEQKLIHEG…TKGRIIYRLR (71 aa)).

The protein belongs to the IF-1 family. In terms of assembly, component of the 30S ribosomal translation pre-initiation complex which assembles on the 30S ribosome in the order IF-2 and IF-3, IF-1 and N-formylmethionyl-tRNA(fMet); mRNA recruitment can occur at any time during PIC assembly.

Its subcellular location is the plastid. The protein resides in the chloroplast. Functionally, one of the essential components for the initiation of protein synthesis. Stabilizes the binding of IF-2 and IF-3 on the 30S subunit to which N-formylmethionyl-tRNA(fMet) subsequently binds. Helps modulate mRNA selection, yielding the 30S pre-initiation complex (PIC). Upon addition of the 50S ribosomal subunit IF-1, IF-2 and IF-3 are released leaving the mature 70S translation initiation complex. In Drimys granadensis, this protein is Translation initiation factor IF-1, chloroplastic.